Here is a 543-residue protein sequence, read N- to C-terminus: MKFLTTGLLATAALAAAQEQQVLQAEDGMGQAPQRGSSIFDETLQKFQSSLEDGISHFWSEMKTNFKDYLPLISLPKKHTRRPDSEWDHVVRGADIESVWVQGADGEKRREIDGKLHNYDLRVKAVDPSKLGVDAGVKQYSGYLDDNDADKHLFYWFFESRNDPKNDPVVLWLNGGPGCSSLTGLFLELGPATIDKNLKVVSNPYSWNSNASVIFLDQPVNVGFSYSGSSVSDTVAAGKDVYALLTLFFKQFPEYATQDFHISGESYAGHYIPVFAAEILSHKNTNINLKSALIGNGLTDPLTQYPQYRPMACGEGGYPAVLDQGTCRSMDNSLERCLSLIETCYSSESAWVCVPAAMYCNSAILAPYQQTGMNPYDVRNKCEDMASLCYPQLNVITEWLNQKSVMQALGVEVESYESCNSGINRDFLFHGDWMKPYHRLVPSVLEKIPVLIYAGDADFICNWLGNQAWTDALEWPGHKKFAEAKLEDLKIVDNKNKGKKIGQVKSSGNFTFMRIFGAGHMVPLNQPEASLEFLNRWLRGEWH.

The N-terminal stretch at 1 to 17 is a signal peptide; that stretch reads MKFLTTGLLATAALAAA. A propeptide spanning residues 18–124 is cleaved from the precursor; sequence QEQQVLQAED…KLHNYDLRVK (107 aa). Intrachain disulfides connect C179–C419, C313–C327, C337–C360, C344–C353, and C382–C389. N-linked (GlcNAc...) asparagine glycosylation is present at N210. S266 is an active-site residue. Residue D458 is part of the active site. A glycan (N-linked (GlcNAc...) asparagine) is linked at N509. H520 is a catalytic residue.

This sequence belongs to the peptidase S10 family.

Its subcellular location is the vacuole. It carries out the reaction Release of a C-terminal amino acid with broad specificity.. In terms of biological role, vacuolar carboxypeptidase involved in degradation of small peptides. Digests preferentially peptides containing an aliphatic or hydrophobic residue in P1' position, as well as methionine, leucine or phenylalanine in P1 position of ester substrate. The polypeptide is Carboxypeptidase Y homolog A (CPYA) (Trichophyton equinum (Horse ringworm fungus)).